Consider the following 382-residue polypeptide: Sphingosine 1-phosphate receptor 1 (382 aa).

Residues 1–46 (MGSTRIPLVKALHSPVSDYVNYDIIVRHYNYTGKLKISADKDNGIK) are Extracellular-facing. Residue K10 is modified to N6-acetyllysine. The N-linked (GlcNAc...) asparagine glycan is linked to N30. Residues 47 to 68 (LISVVFILICCFIILENIFVLL) traverse the membrane as a helical segment. Over 69–82 (TIWKTKKFHRPMYY) the chain is Cytoplasmic. Residues 83 to 104 (FIGNLALSDLLAGVAYTANLLL) traverse the membrane as a helical segment. Over 105–116 (SGATTYKLTPAQ) the chain is Extracellular. The helical transmembrane segment at 117–138 (WFLREGSMFVALSASVFSLLAI) threads the bilayer. 120–121 (RE) is a sphing-4-enine 1-phosphate binding site. Topologically, residues 139–160 (AIERYITMLKMKLHNGSNRFRS) are cytoplasmic. Residues 161–182 (FLLISACWVISLILGGLPIMGW) traverse the membrane as a helical segment. Over 183–196 (NCISTLPSCSTVLP) the chain is Extracellular. C184 and C191 form a disulfide bridge. The helical transmembrane segment at 197–224 (LYHKHYILFCTTVFTLLLLSIVILYCRI) threads the bilayer. Topologically, residues 225-257 (YSLVRTRSRRLTFRKNISKASRSSEKSLALLKT) are cytoplasmic. A Phosphothreonine; by PKB/AKT1 modification is found at T236. Residues 258–278 (VIIVLGVFIACWAPLFILLLL) form a helical membrane-spanning segment. 265–269 (FIACW) serves as a coordination point for sphing-4-enine 1-phosphate. Over 279 to 289 (DVGCKVKTCDI) the chain is Extracellular. A disulfide bridge connects residues C282 and C287. Residues 290-310 (LFRTEYFLVLAVLNSGTNPII) traverse the membrane as a helical segment. The Cytoplasmic segment spans residues 311–382 (YTLSNKEMRR…MSSGNVNSSS (72 aa)). C328 carries S-palmitoyl cysteine lipidation. The segment at 349–382 (EFSRSKSDNSSHPQKDDGDNPETIMSSGNVNSSS) is disordered. S351 and S353 each carry phosphoserine. Positions 351–366 (SRSKSDNSSHPQKDDG) are enriched in basic and acidic residues. Residues 371-382 (TIMSSGNVNSSS) are compositionally biased toward polar residues.

This sequence belongs to the G-protein coupled receptor 1 family. As to quaternary structure, interacts with GNAI1 and GNAI3. Interacts with CD69; this interaction promotes S1PR1 degradation. S1P-induced endothelial cell migration requires the PKB/AKT1-mediated phosphorylation of the third intracellular loop at the Thr-236 residue. Post-translationally, palmitoylated by ZDHHC5. Palmitoylation is required for targeting to plasma membrane, enabling G(i) coupling.

Its subcellular location is the cell membrane. It is found in the endosome. The protein resides in the membrane raft. G-protein coupled receptor for the bioactive lysosphingolipid sphingosine 1-phosphate (S1P) that seems to be coupled to the G(i) subclass of heteromeric G proteins. Signaling leads to the activation of RAC1, SRC, PTK2/FAK1 and MAP kinases. Plays an important role in cell migration, probably via its role in the reorganization of the actin cytoskeleton and the formation of lamellipodia in response to stimuli that increase the activity of the sphingosine kinase SPHK1. Required for normal chemotaxis toward sphingosine 1-phosphate. Required for normal embryonic heart development and normal cardiac morphogenesis. Plays an important role in the regulation of sprouting angiogenesis and vascular maturation. Inhibits sprouting angiogenesis to prevent excessive sprouting during blood vessel development. Required for normal egress of mature T-cells from the thymus into the blood stream and into peripheral lymphoid organs. Plays a role in the migration of osteoclast precursor cells, the regulation of bone mineralization and bone homeostasis. Plays a role in responses to oxidized 1-palmitoyl-2-arachidonoyl-sn-glycero-3-phosphocholine by pulmonary endothelial cells and in the protection against ventilator-induced lung injury. The sequence is that of Sphingosine 1-phosphate receptor 1 (S1PR1) from Bos taurus (Bovine).